The sequence spans 94 residues: Integration host factor subunit beta (94 aa).

This sequence belongs to the bacterial histone-like protein family. In terms of assembly, heterodimer of an alpha and a beta chain.

In terms of biological role, this protein is one of the two subunits of integration host factor, a specific DNA-binding protein that functions in genetic recombination as well as in transcriptional and translational control. This Citrobacter koseri (strain ATCC BAA-895 / CDC 4225-83 / SGSC4696) protein is Integration host factor subunit beta.